The sequence spans 415 residues: Serine hydroxymethyltransferase (415 aa).

(6S)-5,6,7,8-tetrahydrofolate is bound by residues leucine 117 and 121-123; that span reads GHL. Lysine 226 is modified (N6-(pyridoxal phosphate)lysine). Residue glutamate 241 coordinates (6S)-5,6,7,8-tetrahydrofolate.

It belongs to the SHMT family. In terms of assembly, homodimer. It depends on pyridoxal 5'-phosphate as a cofactor.

It localises to the cytoplasm. It catalyses the reaction (6R)-5,10-methylene-5,6,7,8-tetrahydrofolate + glycine + H2O = (6S)-5,6,7,8-tetrahydrofolate + L-serine. It participates in one-carbon metabolism; tetrahydrofolate interconversion. It functions in the pathway amino-acid biosynthesis; glycine biosynthesis; glycine from L-serine: step 1/1. Catalyzes the reversible interconversion of serine and glycine with tetrahydrofolate (THF) serving as the one-carbon carrier. This reaction serves as the major source of one-carbon groups required for the biosynthesis of purines, thymidylate, methionine, and other important biomolecules. Also exhibits THF-independent aldolase activity toward beta-hydroxyamino acids, producing glycine and aldehydes, via a retro-aldol mechanism. The protein is Serine hydroxymethyltransferase of Bacillus licheniformis (strain ATCC 14580 / DSM 13 / JCM 2505 / CCUG 7422 / NBRC 12200 / NCIMB 9375 / NCTC 10341 / NRRL NRS-1264 / Gibson 46).